A 106-amino-acid polypeptide reads, in one-letter code: MNDSEFHRLADTLWLTIEERLDNWDGDSDIDCEINGGVLTLSFENGSKIIINRQEPLHQVWLATKQGGYHFDLKGDEWICDRSGATFWDLLEQAATQQAGEAVSFR.

This sequence belongs to the frataxin family.

In terms of biological role, involved in iron-sulfur (Fe-S) cluster assembly. May act as a regulator of Fe-S biogenesis. The protein is Iron-sulfur cluster assembly protein CyaY of Salmonella arizonae (strain ATCC BAA-731 / CDC346-86 / RSK2980).